We begin with the raw amino-acid sequence, 150 residues long: 3-hydroxyacyl-[acyl-carrier-protein] dehydratase FabZ (150 aa).

The active site involves His53.

This sequence belongs to the thioester dehydratase family. FabZ subfamily.

The protein resides in the cytoplasm. The enzyme catalyses a (3R)-hydroxyacyl-[ACP] = a (2E)-enoyl-[ACP] + H2O. Involved in unsaturated fatty acids biosynthesis. Catalyzes the dehydration of short chain beta-hydroxyacyl-ACPs and long chain saturated and unsaturated beta-hydroxyacyl-ACPs. This Photorhabdus laumondii subsp. laumondii (strain DSM 15139 / CIP 105565 / TT01) (Photorhabdus luminescens subsp. laumondii) protein is 3-hydroxyacyl-[acyl-carrier-protein] dehydratase FabZ.